The chain runs to 96 residues: Large ribosomal subunit protein bL25 (96 aa).

Belongs to the bacterial ribosomal protein bL25 family. Part of the 50S ribosomal subunit; part of the 5S rRNA/L5/L18/L25 subcomplex. Contacts the 5S rRNA. Binds to the 5S rRNA independently of L5 and L18.

In terms of biological role, this is one of the proteins that binds to the 5S RNA in the ribosome where it forms part of the central protuberance. In Francisella philomiragia subsp. philomiragia (strain ATCC 25017 / CCUG 19701 / FSC 153 / O#319-036), this protein is Large ribosomal subunit protein bL25.